The primary structure comprises 297 residues: Iron/alpha-ketoglutarate-dependent dioxygenase ausU (297 aa).

The Fe cation site is built by His-130, Asp-132, and His-206.

It belongs to the PhyH family. In terms of assembly, homodimer. The cofactor is Fe cation.

The protein operates within secondary metabolite biosynthesis; terpenoid biosynthesis. Iron/alpha-ketoglutarate-dependent dioxygenase; part of the gene cluster that mediates the biosynthesis of calidodehydroaustin, a fungal meroterpenoid. The first step of the pathway is the synthesis of 3,5-dimethylorsellinic acid by the polyketide synthase ausA. 3,5-dimethylorsellinic acid is then prenylated by the polyprenyl transferase ausN. Further epoxidation by the FAD-dependent monooxygenase ausM and cyclization by the probable terpene cyclase ausL lead to the formation of protoaustinoid A. Protoaustinoid A is then oxidized to spiro-lactone preaustinoid A3 by the combined action of the FAD-binding monooxygenases ausB and ausC, and the dioxygenase ausE. Acid-catalyzed keto-rearrangement and ring contraction of the tetraketide portion of preaustinoid A3 by ausJ lead to the formation of preaustinoid A4. The aldo-keto reductase ausK, with the help of ausH, is involved in the next step by transforming preaustinoid A4 into isoaustinone which is in turn hydroxylated by the P450 monooxygenase ausI to form austinolide. The cytochrome P450 monooxygenase ausG modifies austinolide to austinol. Austinol is further acetylated to austin by the O-acetyltransferase ausP, which spontaneously changes to dehydroaustin. The cytochrome P450 monooxygenase ausR then converts dehydroaustin is into 7-dehydrodehydroaustin. The hydroxylation catalyzed by ausR permits the O-acetyltransferase ausQ to add an additional acetyl group to the molecule, leading to the formation of acetoxydehydroaustin. The short chain dehydrogenase ausT catalyzes the reduction of the double bond present between carbon atoms 1 and 2 to convert 7-dehydrodehydroaustin into 1,2-dihydro-7-hydroxydehydroaustin. AusQ catalyzes not only an acetylation reaction but also the addition of the PKS ausV diketide product to 1,2-dihydro-7-hydroxydehydroaustin, forming precalidodehydroaustin. Finally, the iron/alpha-ketoglutarate-dependent dioxygenase converts precalidodehydroaustin into calidodehydroaustin. In Aspergillus calidoustus, this protein is Iron/alpha-ketoglutarate-dependent dioxygenase ausU.